The chain runs to 331 residues: Mitochondrial glycine transporter (331 aa).

Solcar repeat units follow at residues serine 19 to glycine 103, leucine 132 to arginine 216, and serine 234 to arginine 318. The next 6 membrane-spanning stretches (helical) occupy residues phenylalanine 25 to glutamine 50, glycine 78 to leucine 104, leucine 138 to glutamate 163, glycine 191 to lysine 214, isoleucine 238 to leucine 264, and glycine 293 to valine 311.

The protein belongs to the mitochondrial carrier (TC 2.A.29) family. SLC25A38 subfamily.

The protein localises to the mitochondrion inner membrane. The enzyme catalyses glycine(in) = glycine(out). In terms of biological role, mitochondrial glycine transporter that imports glycine into the mitochondrial matrix. Plays an important role in providing glycine for the first enzymatic step in heme biosynthesis, the condensation of glycine with succinyl-CoA to produce 5-aminolevulinate (ALA) in the mitochondrial matrix. The chain is Mitochondrial glycine transporter from Neosartorya fischeri (strain ATCC 1020 / DSM 3700 / CBS 544.65 / FGSC A1164 / JCM 1740 / NRRL 181 / WB 181) (Aspergillus fischerianus).